Here is a 447-residue protein sequence, read N- to C-terminus: Ribosomal protein uS12 methylthiotransferase RimO (447 aa).

The 111-residue stretch at Pro4–Pro114 folds into the MTTase N-terminal domain. Cys13, Cys49, Cys78, Cys147, Cys151, and Cys154 together coordinate [4Fe-4S] cluster. In terms of domain architecture, Radical SAM core spans Leu133 to Ala370. Residues Gln373 to Lys443 form the TRAM domain.

The protein belongs to the methylthiotransferase family. RimO subfamily. [4Fe-4S] cluster is required as a cofactor.

The protein resides in the cytoplasm. The catalysed reaction is L-aspartate(89)-[ribosomal protein uS12]-hydrogen + (sulfur carrier)-SH + AH2 + 2 S-adenosyl-L-methionine = 3-methylsulfanyl-L-aspartate(89)-[ribosomal protein uS12]-hydrogen + (sulfur carrier)-H + 5'-deoxyadenosine + L-methionine + A + S-adenosyl-L-homocysteine + 2 H(+). In terms of biological role, catalyzes the methylthiolation of an aspartic acid residue of ribosomal protein uS12. This Acinetobacter baumannii (strain AB307-0294) protein is Ribosomal protein uS12 methylthiotransferase RimO.